The sequence spans 242 residues: Transcription factor bHLH100 (242 aa).

The bHLH domain maps to 61-113 (MKKLNHNASERERRKKINTMFSSLRSCLPPTNQTKKLSVSATVSQALKYIPEL).

As to quaternary structure, homodimer. In terms of tissue distribution, expressed constitutively in roots, leaves, and stems.

Its subcellular location is the nucleus. Its function is as follows. Plays a role in metal homeostasis. Confers tolerance to high zinc (Zn) and nickel (Ni). The chain is Transcription factor bHLH100 (BHLH100) from Arabidopsis thaliana (Mouse-ear cress).